Here is a 59-residue protein sequence, read N- to C-terminus: Conotoxin Sr5.4 (59 aa).

The signal sequence occupies residues 1–22 (MRCLPVFVILLLLIASAPSVDA). The propeptide occupies 23–44 (QLKTKDDVPLASFHDNAKGTQH).

Belongs to the conotoxin T superfamily. Post-translationally, contains 2 disulfide bonds that can be either 'C1-C3, C2-C4' or 'C1-C4, C2-C3', since these disulfide connectivities have been observed for conotoxins with cysteine framework V (for examples, see AC P0DQQ7 and AC P81755). As to expression, expressed by the venom duct.

It localises to the secreted. In Conus spurius (Alphabet cone), this protein is Conotoxin Sr5.4.